The primary structure comprises 336 residues: Biotin synthase (336 aa).

Positions 54–281 (QAIQLSTLLS…KSYVRLSAGR (228 aa)) constitute a Radical SAM core domain. The [4Fe-4S] cluster site is built by Cys69, Cys73, and Cys76. Positions 113, 144, 204, and 276 each coordinate [2Fe-2S] cluster.

This sequence belongs to the radical SAM superfamily. Biotin synthase family. Homodimer. The cofactor is [4Fe-4S] cluster. Requires [2Fe-2S] cluster as cofactor.

It carries out the reaction (4R,5S)-dethiobiotin + (sulfur carrier)-SH + 2 reduced [2Fe-2S]-[ferredoxin] + 2 S-adenosyl-L-methionine = (sulfur carrier)-H + biotin + 2 5'-deoxyadenosine + 2 L-methionine + 2 oxidized [2Fe-2S]-[ferredoxin]. It functions in the pathway cofactor biosynthesis; biotin biosynthesis; biotin from 7,8-diaminononanoate: step 2/2. Catalyzes the conversion of dethiobiotin (DTB) to biotin by the insertion of a sulfur atom into dethiobiotin via a radical-based mechanism. This chain is Biotin synthase, found in Actinobacillus pleuropneumoniae serotype 7 (strain AP76).